The primary structure comprises 182 residues: NADH-quinone oxidoreductase subunit B 1 (182 aa).

Residues cysteine 47, cysteine 48, cysteine 113, and cysteine 142 each contribute to the [4Fe-4S] cluster site.

Belongs to the complex I 20 kDa subunit family. As to quaternary structure, NDH-1 is composed of 14 different subunits. Subunits NuoB, C, D, E, F, and G constitute the peripheral sector of the complex. [4Fe-4S] cluster serves as cofactor.

Its subcellular location is the cell inner membrane. The catalysed reaction is a quinone + NADH + 5 H(+)(in) = a quinol + NAD(+) + 4 H(+)(out). NDH-1 shuttles electrons from NADH, via FMN and iron-sulfur (Fe-S) centers, to quinones in the respiratory chain. Couples the redox reaction to proton translocation (for every two electrons transferred, four hydrogen ions are translocated across the cytoplasmic membrane), and thus conserves the redox energy in a proton gradient. This chain is NADH-quinone oxidoreductase subunit B 1, found in Anaeromyxobacter dehalogenans (strain 2CP-C).